The primary structure comprises 102 residues: Co-chaperonin GroES (102 aa).

It belongs to the GroES chaperonin family. Heptamer of 7 subunits arranged in a ring. Interacts with the chaperonin GroEL.

The protein resides in the cytoplasm. Together with the chaperonin GroEL, plays an essential role in assisting protein folding. The GroEL-GroES system forms a nano-cage that allows encapsulation of the non-native substrate proteins and provides a physical environment optimized to promote and accelerate protein folding. GroES binds to the apical surface of the GroEL ring, thereby capping the opening of the GroEL channel. The sequence is that of Co-chaperonin GroES from Chlamydia caviae (strain ATCC VR-813 / DSM 19441 / 03DC25 / GPIC) (Chlamydophila caviae).